A 675-amino-acid chain; its full sequence is Protein PALS1 (675 aa).

2 disordered regions span residues 1–32 and 52–79; these read MTTS…HPKH and RSAQ…KQEL. Residues 1-345 form a required for the correct localization of PALS1 and PATJ at cell-cell contacts and the normal formation of tight junctions and adherens junctions region; the sequence is MTTSYMNGHV…QQIKPPPAKE (345 aa). Ser-14 and Ser-25 each carry phosphoserine. The tract at residues 21–140 is interaction with PARD6B; that stretch reads LGLASPEEHP…LKHIQHTLVD (120 aa). Residues 54-79 show a composition bias toward basic and acidic residues; sequence AQLERIRQQQEDMRRRREEEGKKQEL. A phosphoserine mark is found at Ser-83 and Ser-84. 2 L27 domains span residues 120–177 and 179–235; these read KILE…NKAS and PFPL…MQLE. The tract at residues 181-243 is interaction with LIN7C; sequence PLIANVQDLV…LEPITDERVY (63 aa). One can recognise a PDZ domain in the interval 256–336; that stretch reads IVRIEKARDI…TLTFVLIPSQ (81 aa). Positions 345–417 constitute an SH3 domain; it reads ETVIHVKAHF…PGKSFQQQRE (73 aa). Residues 479–660 enclose the Guanylate kinase-like domain; the sequence is KRPIILIGPQ…AYQELLRLIN (182 aa). 486 to 493 is an ATP binding site; sequence GPQNCGQN.

This sequence belongs to the MAGUK family. Heterodimer with MPP1. Forms a heterotrimeric complex composed of PALS1, LIN7B and PATJ; the N-terminal L27 domain of PALS1 interacts with the L27 domain of PATJ and the C-terminal L27 domain of PALS1 interacts with the L27 domain of LIN7B. Component of a complex composed of PALS1, CRB1 and MPP4. Component of a complex whose core is composed of ARHGAP17, AMOT, PALS1, PATJ and PARD3/PAR3. Component of a complex composed of PALS1, CRB1 and EPB41L5. Within the complex, interacts (via HOOK domain) with EPB41L5 (via FERM domain), and interacts with CRB1 (via intracellular domain). Component of a complex composed of PALS1, MPP3 and CRB1; PALS1 acts as a bridging protein between MPP3 (via guanylate kinase-like domain) and CRB1. Component of a complex composed of CRB3, PALS1 and PATJ. As part of the Crumbs complex; interacts with WWP1, the interaction is enhanced by AMOTL2 and facilitates WWP1 localization to the plasma membrane. The Crumbs complex promotes monoubiquitination of AMOTL2 by WWP1, which activates the Hippo signaling pathway. Interacts (via PDZ domain) with PATJ (via N-terminus). Interacts with EZR. Interacts (via PDZ domain) with CRB1 (via C-terminal ERLI motif). While the PDZ domain is sufficient for interaction with CRB1, the adjacent SH3 and guanylate kinase-like domains are likely to contribute to a high affinity interaction. Interacts with WWTR1/TAZ (via WW domain). Interacts with MPP7. Interacts (via PDZ domain) with CRB3 (via C-terminus). Interacts with LIN7C. Interacts with MPDZ. Interacts with PARD6B. Interacts with SC6A1. Interacts with CDH5; the interaction promotes PALS1 localization to cell junctions and is required for CDH5-mediated vascular lumen formation and endothelial cell. Interacts with NPHP1 (via coiled coil and SH3 domains). Interacts with NPHP4. Interacts with CRB2.

Its subcellular location is the golgi apparatus. It is found in the cell membrane. It localises to the endomembrane system. The protein localises to the cell junction. The protein resides in the tight junction. Its subcellular location is the adherens junction. It is found in the cell projection. It localises to the axon. The protein localises to the perikaryon. The protein resides in the apical cell membrane. In terms of biological role, plays a role in tight junction biogenesis and in the establishment of cell polarity in epithelial cells. Also involved in adherens junction biogenesis by ensuring correct localization of the exocyst complex protein EXOC4/SEC8 which allows trafficking of adherens junction structural component CDH1 to the cell surface. Plays a role through its interaction with CDH5 in vascular lumen formation and endothelial membrane polarity. Required during embryonic and postnatal retinal development. Required for the maintenance of cerebellar progenitor cells in an undifferentiated proliferative state, preventing premature differentiation, and is required for cerebellar histogenesis, fissure formation, cerebellar layer organization and cortical development. Plays a role in neuronal progenitor cell survival, potentially via promotion of mTOR signaling. Plays a role in the radial and longitudinal extension of the myelin sheath in Schwann cells. May modulate SC6A1/GAT1-mediated GABA uptake by stabilizing the transporter. May play a role in the T-cell receptor-mediated activation of NF-kappa-B. Required for localization of EZR to the apical membrane of parietal cells and may play a role in the dynamic remodeling of the apical cytoskeleton. Required for the normal polarized localization of the vesicular marker STX4. Required for the correct trafficking of the myelin proteins PMP22 and MAG. Involved in promoting phosphorylation and cytoplasmic retention of transcriptional coactivators YAP1 and WWTR1/TAZ which leads to suppression of TGFB1-dependent transcription of target genes such as CCN2/CTGF, SERPINE1/PAI1, SNAI1/SNAIL1 and SMAD7. The protein is Protein PALS1 of Rattus norvegicus (Rat).